The following is a 670-amino-acid chain: Catalase (670 aa).

Residues His-61 and Asn-132 contribute to the active site. A heme-binding site is contributed by Tyr-345.

It belongs to the catalase family. As to quaternary structure, homotetramer. It depends on heme as a cofactor.

Its subcellular location is the peroxisome matrix. The enzyme catalyses 2 H2O2 = O2 + 2 H2O. Catalyzes the degradation of hydrogen peroxide (H(2)O(2)) generated by peroxisomal oxidases to water and oxygen, thereby protecting cells from the toxic effects of hydrogen peroxide. In Penicillium janthinellum (Penicillium vitale), this protein is Catalase.